Here is a 453-residue protein sequence, read N- to C-terminus: UDP-N-acetylmuramoylalanine--D-glutamate ligase (453 aa).

Residue 119–125 (GTNGKTT) coordinates ATP.

It belongs to the MurCDEF family.

It localises to the cytoplasm. The enzyme catalyses UDP-N-acetyl-alpha-D-muramoyl-L-alanine + D-glutamate + ATP = UDP-N-acetyl-alpha-D-muramoyl-L-alanyl-D-glutamate + ADP + phosphate + H(+). It functions in the pathway cell wall biogenesis; peptidoglycan biosynthesis. In terms of biological role, cell wall formation. Catalyzes the addition of glutamate to the nucleotide precursor UDP-N-acetylmuramoyl-L-alanine (UMA). In Syntrophus aciditrophicus (strain SB), this protein is UDP-N-acetylmuramoylalanine--D-glutamate ligase.